Here is a 707-residue protein sequence, read N- to C-terminus: Caprin-1 (707 aa).

2 stretches are compositionally biased toward low complexity: residues 1-15 (MPSA…SKSS) and 22-43 (GSSG…PATG). The tract at residues 1–48 (MPSATSHSGSGSKSSGPPPPSGSSGSEAAAGAAAPASQHPATGTGAVQ) is disordered. At proline 2 the chain carries N-acetylproline. Serine 10 is modified (phosphoserine). Residues 58–92 (VIDKKLRNLEKKKGKLDDYQERMNKGERLNQDQLD) adopt a coiled-coil conformation. Serine 113 is subject to Phosphoserine. Positions 123 to 151 (KTIKKTARREQLMREEAEQKRLKTVLELQ) form a coiled coil. An Omega-N-methylarginine modification is found at arginine 163. The disordered stretch occupies residues 325 to 347 (LQQQPQAASPSVPEPHSLTPVAQ). The segment covering 326–335 (QQQPQAASPS) has biased composition (low complexity). A phosphoserine mark is found at serine 333 and serine 341. Residues 358-379 (QDLMAQMQGPYNFIQDSMLDFE) form a G3BP1-binding region. Disordered stretches follow at residues 412–443 (ESRL…YTAS), 523–558 (PVPP…EQTE), and 570–620 (TYHG…RGLM). The segment covering 431–443 (PLVSSTSEGYTAS) has biased composition (polar residues). The span at 535-558 (QQSQYQASYNQSFSSQPHQVEQTE) shows a compositional bias: low complexity. Residues 572-603 (HGSQDQPHQVPGNHQQPPQQSTGFPRSSQPYY) show a composition bias toward polar residues. Tyrosine 623 is modified (phosphotyrosine). An omega-N-methylarginine mark is found at arginine 624 and arginine 631. Residues tyrosine 634 and tyrosine 637 each carry the phosphotyrosine modification. An Omega-N-methylarginine modification is found at arginine 638. Over residues 641–655 (FSNTPNSGYTQSQFN) the composition is skewed to polar residues. The interval 641–707 (FSNTPNSGYT…MPQMNTQQVN (67 aa)) is disordered. O-linked (GlcNAc) serine glycans are attached at residues serine 642 and serine 647. Tyrosine 649, tyrosine 660, tyrosine 663, and tyrosine 668 each carry phosphotyrosine. 2 stretches are compositionally biased toward low complexity: residues 674-684 (RGSGQSGPRGA) and 695-707 (NRGM…QQVN). Arginine 696 is subject to Asymmetric dimethylarginine; alternate. Residue arginine 696 is modified to Omega-N-methylarginine; alternate.

Belongs to the caprin family. In terms of assembly, may form homomultimers. Interacts with G3BP1; interaction is direct and promotes stress granule formation. Interacts with G3BP2; interaction is direct and promotes stress granule formation. Interacts with PQBP1. Interacts with DDX3X. Interacts (when phosphorylated by EPHA4) with FMR1; interaction with FMR1 promotes formation of a membraneless compartment. Post-translationally, tyrosine phosphorylation by EPHA4 promotes interaction with FMR1 and liquid-liquid phase separation (LLPS) for the formation of a membraneless compartment that concentrates mRNAs with associated regulatory factors. In terms of processing, O-glycosylated (O-GlcNAcylated), in a cell cycle-dependent manner. O-glycosylation by OGT inhibit ability to undergo liquid-liquid phase separation (LLPS). As to expression, expressed in hippocampal and neocortical pyramidal neurons, but not in Purkinje cells.

The protein resides in the cytoplasm. The protein localises to the cytoplasmic ribonucleoprotein granule. Its subcellular location is the cytosol. It is found in the cell projection. It localises to the dendrite. The protein resides in the lamellipodium. Its activity is regulated as follows. Ability to mediate liquid-liquid phase separation is regulated by ATP: moderate concentrations of ATP enhance phase separation, whereas high concentrations of ATP lead to inhibition of phase separation. Functionally, mRNA-binding protein that acts as a regulator of mRNAs transport, translation and/or stability, and which is involved in neurogenesis, synaptic plasticity in neurons and cell proliferation and migration in multiple cell types. Plays an essential role in cytoplasmic stress granule formation. Acts as an mRNA regulator by mediating formation of some phase-separated membraneless compartment: undergoes liquid-liquid phase separation upon binding to target mRNAs, leading to assemble mRNAs into cytoplasmic ribonucleoprotein granules that concentrate mRNAs with associated regulatory factors. Undergoes liquid-liquid phase separation following phosphorylation and interaction with FMR1, promoting formation of cytoplasmic ribonucleoprotein granules that concentrate mRNAs with factors that inhibit translation and mediate deadenylation of target mRNAs. In these cytoplasmic ribonucleoprotein granules, CAPRIN1 mediates recruitment of CNOT7 deadenylase, leading to mRNA deadenylation and degradation. Binds directly and selectively to MYC and CCND2 mRNAs. In neuronal cells, directly binds to several mRNAs associated with RNA granules, including BDNF, CAMK2A, CREB1, MAP2, NTRK2 mRNAs, as well as to GRIN1 and KPNB1 mRNAs, but not to rRNAs. In Rattus norvegicus (Rat), this protein is Caprin-1 (Caprin1).